The primary structure comprises 371 residues: MLDISLIMLSAGESSRFNAPVKKQFLRLGEQPLWLYATKNLSSFYPFKQIVVTSGNISYMKKFAPEYKFVQGGATRAQSLLNALSMVESEYVLVSDVARVLISKNLFNNIIENHDKADCITPVLKVSDTTIYAQEAIDRDKIKLIQTPQLSRTSMLKKALEQSSNFTDDSTAIQAIGGKIWYVQGDELAKKITFKEDLKSLNLPKPSWDIFNGNGFDVHEFGEQRALLLGGVKVHENMGLKAHSDGDVLAHALIDALLGAAGLGDIGELFPDNDMQYKNADSMLLLQNAYTLVQNYGFELVNADITIIAQTPKMKEFKEAIAFNIAKTLKTTPNKINIKATTTEHLGFVGRKEGIAVLTSVNLKYFDWMKL.

The interval 1-210 (MLDISLIMLS…LNLPKPSWDI (210 aa)) is 2-C-methyl-D-erythritol 4-phosphate cytidylyltransferase. The segment at 211 to 371 (FNGNGFDVHE…NLKYFDWMKL (161 aa)) is 2-C-methyl-D-erythritol 2,4-cyclodiphosphate synthase. Positions 217 and 219 each coordinate a divalent metal cation. 4-CDP-2-C-methyl-D-erythritol 2-phosphate is bound by residues 217–219 (DVH) and 243–244 (HS). H251 is a binding site for a divalent metal cation. 4-CDP-2-C-methyl-D-erythritol 2-phosphate contacts are provided by residues 265 to 267 (DIG), 270 to 274 (FPDND), 341 to 344 (TTTE), F348, and R351.

This sequence in the N-terminal section; belongs to the IspD/TarI cytidylyltransferase family. IspD subfamily. In the C-terminal section; belongs to the IspF family. The cofactor is a divalent metal cation.

It carries out the reaction 2-C-methyl-D-erythritol 4-phosphate + CTP + H(+) = 4-CDP-2-C-methyl-D-erythritol + diphosphate. The catalysed reaction is 4-CDP-2-C-methyl-D-erythritol 2-phosphate = 2-C-methyl-D-erythritol 2,4-cyclic diphosphate + CMP. Its pathway is isoprenoid biosynthesis; isopentenyl diphosphate biosynthesis via DXP pathway; isopentenyl diphosphate from 1-deoxy-D-xylulose 5-phosphate: step 2/6. It participates in isoprenoid biosynthesis; isopentenyl diphosphate biosynthesis via DXP pathway; isopentenyl diphosphate from 1-deoxy-D-xylulose 5-phosphate: step 4/6. In terms of biological role, bifunctional enzyme that catalyzes the formation of 4-diphosphocytidyl-2-C-methyl-D-erythritol from CTP and 2-C-methyl-D-erythritol 4-phosphate (MEP) (IspD), and catalyzes the conversion of 4-diphosphocytidyl-2-C-methyl-D-erythritol 2-phosphate (CDP-ME2P) to 2-C-methyl-D-erythritol 2,4-cyclodiphosphate (ME-CPP) with a corresponding release of cytidine 5-monophosphate (CMP) (IspF). The protein is Bifunctional enzyme IspD/IspF of Campylobacter lari (strain RM2100 / D67 / ATCC BAA-1060).